The sequence spans 2321 residues: Neurogenic locus notch homolog protein 3 (2321 aa).

A compositionally biased stretch (basic residues) spans 1–14 (MGPGARGRRRRRRP). The interval 1 to 26 (MGPGARGRRRRRRPMSPPPPPPPVRA) is disordered. An N-terminal signal peptide occupies residues 1–39 (MGPGARGRRRRRRPMSPPPPPPPVRALPLLLLLAGPGAA). A compositionally biased stretch (pro residues) spans 15-25 (MSPPPPPPPVR). 3 EGF-like domains span residues 40–77 (APPC…ERCQ), 78–118 (LEDP…PDCS), and 119–156 (LPDP…RSCR). Over 40 to 1643 (APPCLDGSPC…LEPPEPSVPL (1604 aa)) the chain is Extracellular. Disulfide bonds link Cys-43–Cys-55, Cys-49–Cys-65, Cys-67–Cys-76, Cys-82–Cys-93, Cys-87–Cys-106, Cys-108–Cys-117, Cys-123–Cys-134, Cys-128–Cys-144, Cys-146–Cys-155, Cys-162–Cys-174, Cys-168–Cys-183, Cys-185–Cys-194, Cys-201–Cys-212, Cys-206–Cys-222, Cys-224–Cys-233, Cys-240–Cys-251, Cys-245–Cys-260, Cys-262–Cys-271, Cys-278–Cys-291, Cys-285–Cys-300, Cys-302–Cys-311, Cys-318–Cys-329, Cys-323–Cys-338, Cys-340–Cys-349, Cys-355–Cys-366, Cys-360–Cys-377, Cys-379–Cys-388, Cys-395–Cys-408, Cys-402–Cys-417, Cys-419–Cys-428, Cys-435–Cys-446, Cys-440–Cys-455, Cys-457–Cys-466, Cys-473–Cys-484, Cys-478–Cys-493, Cys-495–Cys-504, Cys-511–Cys-522, Cys-516–Cys-531, Cys-533–Cys-542, Cys-549–Cys-559, Cys-554–Cys-568, Cys-570–Cys-579, Cys-586–Cys-597, Cys-591–Cys-606, Cys-608–Cys-617, Cys-624–Cys-634, Cys-629–Cys-643, Cys-645–Cys-654, Cys-661–Cys-672, Cys-666–Cys-681, Cys-683–Cys-692, Cys-699–Cys-709, Cys-704–Cys-718, Cys-720–Cys-729, Cys-738–Cys-749, Cys-743–Cys-758, Cys-760–Cys-769, Cys-775–Cys-786, Cys-780–Cys-796, Cys-798–Cys-807, Cys-814–Cys-826, Cys-820–Cys-835, Cys-837–Cys-846, Cys-853–Cys-864, Cys-858–Cys-873, Cys-875–Cys-884, Cys-891–Cys-901, Cys-896–Cys-910, Cys-912–Cys-921, Cys-928–Cys-939, Cys-933–Cys-948, Cys-950–Cys-959, Cys-966–Cys-977, Cys-971–Cys-986, Cys-988–Cys-997, Cys-1004–Cys-1015, Cys-1009–Cys-1022, Cys-1024–Cys-1033, Cys-1040–Cys-1061, Cys-1055–Cys-1070, Cys-1072–Cys-1081, Cys-1088–Cys-1099, Cys-1093–Cys-1108, Cys-1110–Cys-1119, Cys-1126–Cys-1137, Cys-1131–Cys-1146, Cys-1148–Cys-1157, Cys-1164–Cys-1182, Cys-1176–Cys-1191, Cys-1193–Cys-1202, Cys-1209–Cys-1222, Cys-1214–Cys-1232, Cys-1234–Cys-1243, Cys-1250–Cys-1261, Cys-1255–Cys-1275, Cys-1277–Cys-1286, Cys-1293–Cys-1304, Cys-1298–Cys-1313, and Cys-1315–Cys-1324. In terms of domain architecture, EGF-like 4; calcium-binding spans 158-195 (DVDECRVGEPCRHGGTCLNTPGSFRCQCPAGYTGPLCE). The EGF-like 5 domain occupies 197–234 (PAVPCAPSPCRNGGTCRQSGDLTYDCACLPGFEGQNCE). The region spanning 236–272 (NVDDCPGHRCLNGGTCVDGVNTYNCQCPPEWTGQFCT) is the EGF-like 6; calcium-binding domain. The 39-residue stretch at 274–312 (DVDECQLQPNACHNGGTCFNTLGGHSCVCVNGWTGESCS) folds into the EGF-like 7 domain. In terms of domain architecture, EGF-like 8; calcium-binding spans 314–350 (NIDDCATAVCFHGATCHDRVASFYCACPMGKTGLLCH). An EGF-like 9 domain is found at 351–389 (LDDACVSNPCHEDAICDTNPVNGRAICTCPPGFTGGACD). The 39-residue stretch at 391–429 (DVDECSIGANPCEHLGRCVNTQGSFLCQCGRGYTGPRCE) folds into the EGF-like 10; calcium-binding domain. In terms of domain architecture, EGF-like 11; calcium-binding spans 431–467 (DVNECLSGPCRNQATCLDRIGQFTCICMAGFTGTYCE). The EGF-like 12; calcium-binding domain occupies 469-505 (DIDECQSSPCVNGGVCKDRVNGFSCTCPSGFSGSTCQ). The 37-residue stretch at 507–543 (DVDECASTPCRNGAKCVDQPDGYECRCAEGFEGTLCD) folds into the EGF-like 13; calcium-binding domain. Residues 545-580 (NVDDCSPDPCHHGRCVDGIASFSCACAPGYTGTRCE) form the EGF-like 14; calcium-binding domain. Residues 582-618 (QVDECRSQPCRHGGKCLDLVDKYLCRCPSGTTGVNCE) enclose the EGF-like 15; calcium-binding domain. An EGF-like 16; calcium-binding domain is found at 620-655 (NIDDCASNPCTFGVCRDGINRYDCVCQPGFTGPLCN). Positions 657–693 (EINECASSPCGEGGSCVDGENGFRCLCPPGSLPPLCL) constitute an EGF-like 17; calcium-binding domain. EGF-like domains lie at 695 to 730 (PSHP…PRCS), 734 to 770 (ARDA…RQCE), and 771 to 808 (LLSP…PRCQ). The EGF-like 21; calcium-binding domain maps to 810–847 (DVDECAGPAPCGPHGICTNLAGSFSCTCHGGYTGPSCD). An EGF-like 22; calcium-binding domain is found at 849 to 885 (DINDCDPNPCLNGGSCQDGVGSFSCSCLPGFAGPRCA). Residues 887–922 (DVDECLSNPCGPGTCTDHVASFTCTCPPGYGGFHCE) form the EGF-like 23; calcium-binding domain. 5 EGF-like domains span residues 924-960 (DLPD…AHCQ), 962-998 (EADP…PQCQ), 1000-1034 (LVDW…RLCD), 1036-1082 (RSLP…SHCE), and 1084-1120 (EVDP…DNCE). One can recognise an EGF-like 29; calcium-binding domain in the interval 1122-1158 (DVDECASQPCQHGGSCIDLVARYLCSCPPGTLGVLCE). The EGF-like 30; calcium-binding domain maps to 1160-1203 (NEDDCGPGPPLDSGPRCLHNGTCVDLVGGFRCTCPPGYTGLRCE). Asn-1179 carries an N-linked (GlcNAc...) asparagine glycan. EGF-like domains are found at residues 1205–1244 (DINE…PRCQ), 1246–1287 (VLSP…PRCE), 1289–1325 (VARS…PSCR), and 1335–1373 (SNAS…PRCE). A glycan (N-linked (GlcNAc...) asparagine) is linked at Asn-1336. 12 cysteine pairs are disulfide-bonded: Cys-1339-Cys-1350, Cys-1344-Cys-1361, Cys-1363-Cys-1372, Cys-1387-Cys-1410, Cys-1392-Cys-1405, Cys-1401-Cys-1417, Cys-1428-Cys-1451, Cys-1433-Cys-1446, Cys-1442-Cys-1458, Cys-1467-Cys-1493, Cys-1475-Cys-1488, and Cys-1484-Cys-1500. LNR repeat units lie at residues 1387–1427 (CPRA…PWRQ), 1428–1458 (CEAL…NFDC), and 1467–1505 (CNPV…SEVP). A glycan (N-linked (GlcNAc...) asparagine) is linked at Asn-1438. The helical transmembrane segment at 1644–1664 (LPLLVAGAVLLLVILVLGVMV) threads the bilayer. The Cytoplasmic segment spans residues 1665-2321 (ARRKREHSTL…EVTPKRQVLA (657 aa)). ANK repeat units lie at residues 1838–1867 (TGET…DTNA), 1871–1901 (SGRT…DLDA), 1905–1934 (DGST…DVNA), 1938–1967 (LGKS…NKDM), and 1971–2000 (KEET…NREI). The interval 2024 to 2120 (LDQPSGPRSP…FGGPPASPGG (97 aa)) is disordered. Residues 2039-2053 (LGPLLCPPGAFLPGL) show a composition bias toward low complexity. Arg-2174 carries the omega-N-methylarginine modification. Residues 2190 to 2321 (APGPQLLNPG…EVTPKRQVLA (132 aa)) form a disordered region. The span at 2269–2289 (STPSPATATGAMATTTGALPA) shows a compositional bias: low complexity. Residues 2296–2308 (VPSSLAQAQTQLG) show a composition bias toward polar residues.

Belongs to the NOTCH family. As to quaternary structure, heterodimer of a C-terminal fragment N(TM) and a N-terminal fragment N(EC) which are probably linked by disulfide bonds. Interacts with MAML1, MAML2 and MAML3 which act as transcriptional coactivators for NOTCH3. Interacts with PSMA1. Interacts with HIF1AN. Post-translationally, synthesized in the endoplasmic reticulum as an inactive form which is proteolytically cleaved by a furin-like convertase in the trans-Golgi network before it reaches the plasma membrane to yield an active, ligand-accessible form. Cleavage results in a C-terminal fragment N(TM) and a N-terminal fragment N(EC). Following ligand binding, it is cleaved by TNF-alpha converting enzyme (TACE) to yield a membrane-associated intermediate fragment called notch extracellular truncation (NEXT). This fragment is then cleaved by presenilin dependent gamma-secretase to release a notch-derived peptide containing the intracellular domain (NICD) from the membrane. In terms of processing, phosphorylated. Hydroxylated by HIF1AN. In terms of tissue distribution, ubiquitously expressed in fetal and adult tissues.

The protein resides in the cell membrane. The protein localises to the nucleus. Its function is as follows. Functions as a receptor for membrane-bound ligands Jagged1, Jagged2 and Delta1 to regulate cell-fate determination. Upon ligand activation through the released notch intracellular domain (NICD) it forms a transcriptional activator complex with RBPJ/RBPSUH and activates genes of the enhancer of split locus. Affects the implementation of differentiation, proliferation and apoptotic programs. The protein is Neurogenic locus notch homolog protein 3 (NOTCH3) of Homo sapiens (Human).